The primary structure comprises 400 residues: Nucleoside permease NupC (400 aa).

Topologically, residues 1–3 (MDR) are cytoplasmic. A helical membrane pass occupies residues 4 to 24 (VLHFVLALAVVAILALLVSSD). Residues 25–36 (RKKIRIRYVIQL) lie on the Periplasmic side of the membrane. A helical membrane pass occupies residues 37-57 (LVIEVLLAWFFLNSDVGLGFV). At 58-86 (KGFSEMFEKLLGFANEGTNFVFGSMNDQG) the chain is on the cytoplasmic side. Residues 87–107 (LAFFFLKVLCPIVFISALIGI) traverse the membrane as a helical segment. The Periplasmic portion of the chain corresponds to 108-168 (LQHIRVLPVI…GKISRNRMYT (61 aa)). Residues 169–189 (MAATAMSTVSMSIVGAYMTML) form a helical membrane-spanning segment. Residues 190-192 (EPK) are Cytoplasmic-facing. A helical membrane pass occupies residues 193–213 (YVVAALVLNMFSTFIVLSLIN). Topologically, residues 214–250 (PYRVDASEENIQMSNLHEGQSFFEMLGEYILAGFKVA) are periplasmic. Residues 251 to 271 (IIVAAMLIGFIALIAALNALF) traverse the membrane as a helical segment. Residues 272–281 (ATVTGWFGYS) are Cytoplasmic-facing. Residues 282–302 (ISFQGILGYIFYPIAWVMGVP) traverse the membrane as a helical segment. Over 303–341 (SSEALQVGSIMATKLVSNEFVAMMDLQKIASTLSPRAEG) the chain is Periplasmic. A helical membrane pass occupies residues 342-362 (IISVFLVSFANFSSIGIIAGA). At 363–378 (VKGLNEEQGNVVSRFG) the chain is on the cytoplasmic side. A helical membrane pass occupies residues 379 to 399 (LKLVYGSTLVSVLSASIAALV). Position 400 (leucine 400) is a topological domain, periplasmic.

Belongs to the concentrative nucleoside transporter (CNT) (TC 2.A.41) family.

The protein localises to the cell inner membrane. The enzyme catalyses adenosine(in) + H(+)(in) = adenosine(out) + H(+)(out). It carries out the reaction uridine(in) + H(+)(in) = uridine(out) + H(+)(out). It catalyses the reaction thymidine(in) + H(+)(in) = thymidine(out) + H(+)(out). The catalysed reaction is cytidine(in) + H(+)(in) = cytidine(out) + H(+)(out). The enzyme catalyses 2'-deoxycytidine(in) + H(+)(in) = 2'-deoxycytidine(out) + H(+)(out). With respect to regulation, transport is inhibited by the proton uncoupler dinitrophenol. Inhibited by the nucleoside antibiotic showdomycin. In terms of biological role, nucleoside transport protein that can transport adenosine, uridine, thymidine, cytidine and deoxycytidine. Shows weak activity with inosine and xanthosine. Transport is driven by a proton motive force. Does not transport guanosine, deoxyguanosine, hypoxanthine or uracil. Also shows activity with the chemotherapeutic drugs 3'-azido-3'-deoxythymidine (AZT), 2',3'- dideoxycytidine (ddC) and 2'-deoxy-2',2'-difluorocytidine (gemcitabine). This chain is Nucleoside permease NupC, found in Escherichia coli (strain K12).